Here is a 229-residue protein sequence, read N- to C-terminus: Urease accessory protein UreF (229 aa).

The protein belongs to the UreF family. UreD, UreF and UreG form a complex that acts as a GTP-hydrolysis-dependent molecular chaperone, activating the urease apoprotein by helping to assemble the nickel containing metallocenter of UreC. The UreE protein probably delivers the nickel.

Its subcellular location is the cytoplasm. Its function is as follows. Required for maturation of urease via the functional incorporation of the urease nickel metallocenter. This is Urease accessory protein UreF from Staphylococcus epidermidis (strain ATCC 35984 / DSM 28319 / BCRC 17069 / CCUG 31568 / BM 3577 / RP62A).